Here is a 282-residue protein sequence, read N- to C-terminus: uncharacterized protein (282 aa).

Helical transmembrane passes span 9–29 (LLKI…APHG), 43–63 (ISGR…FLYA), 123–143 (VFVS…LYLV), 158–178 (YIGM…DNIL), and 232–252 (LAAG…ILLM).

This sequence belongs to the steroid 5-alpha reductase family.

The protein localises to the endoplasmic reticulum membrane. This is an uncharacterized protein from Schizosaccharomyces pombe (strain 972 / ATCC 24843) (Fission yeast).